We begin with the raw amino-acid sequence, 387 residues long: Protein spaetzle 5 (387 aa).

The first 29 residues, M1–A29, serve as a signal peptide directing secretion. The propeptide occupies H30–R284. The tract at residues Q133–S197 is disordered. Residues N195 and N204 are each glycosylated (N-linked (GlcNAc...) asparagine). Disordered stretches follow at residues K219–R256 and G269–T291. The segment covering Q237 to P247 has biased composition (acidic residues). The segment covering L276 to S286 has biased composition (basic residues). Residues T291–I384 form the Spaetzle domain. Intrachain disulfides connect C293/C350, C331/C380, and C340/C382.

Homodimer; disulfide-linked. As to expression, detected in the fan-shaped body which is a component of the locomotion center in the central nervous system (CNS) (at protein level).

Functionally, neurotrophin which may function as a ligand for the Toll-related receptors Toll-6 and Toll-7. Binds to Toll-7 and Toll-6, and probably acts as their ligands in the promotion of motor axon targeting and neuronal survival in the central nervous system (CNS). Involved in synaptic targeting of ISNb/d motorneurons and also some SNa motorneurons. May be involved in the normal development of specific neurons at the neuromuscular junction. This is Protein spaetzle 5 from Drosophila melanogaster (Fruit fly).